The sequence spans 116 residues: uncharacterized protein (116 aa).

The N-terminal stretch at Met1 to Ala15 is a signal peptide.

This is an uncharacterized protein from Haemophilus influenzae (strain ATCC 51907 / DSM 11121 / KW20 / Rd).